A 589-amino-acid chain; its full sequence is Protein PAF1 homolog (589 aa).

Over residues 1-54 (MASYRPPYPPLPQPPSQNSLAPPPPPPSLPPPVPPPPPSHQPYSYPPPPPPPPH) the composition is skewed to pro residues. Disordered regions lie at residues 1–180 (MASY…PLLT) and 542–589 (GVYS…DYSE). Positions 55–65 (AYYQQGPHYPQ) are enriched in low complexity. The segment covering 71–87 (APPPPPPPSAPPPLVPD) has biased composition (pro residues). A compositionally biased stretch (basic and acidic residues) spans 88 to 116 (PPRHQGPNDHEKGASKQVGRRERAKPDPS). Positions 117 to 127 (KHHHRSHLPHS) are enriched in basic residues. Residues 126-159 (HSKKIETEEERRLRKKRELEKQRQDEKHRQQMKN) adopt a coiled-coil conformation. Positions 128-154 (KKIETEEERRLRKKRELEKQRQDEKHR) are enriched in basic and acidic residues.

It belongs to the PAF1 family. As to quaternary structure, component of the nuclear PAF1 complex (PAF1C), which consists of VIP2/ELF7/PAF1, VIP3/SKI8/WDR61, VIP4/LEO1, VIP5/RTF1, VIP6/ELF8/CTR9 and CDC73. Expressed in roots, leaves and shoot apex.

Its subcellular location is the nucleus. Functionally, component of the PAF1 complex (PAF1C) which is involved in histone modifications such as methylation on histone H3 'Lys-4' (H3K4me3). Involved in regulation of flowering time. Required for the expression of the flowering repressors and MAD-box genes FLC, AGL27/FLM and AGL31/MAF2. Required for histone H3 trimethylation on 'Lys-4' H3K4me3 at the FLC and AGL27/FLM loci. Involved in the control of seed dormancy and germination. This is Protein PAF1 homolog from Arabidopsis thaliana (Mouse-ear cress).